Here is a 603-residue protein sequence, read N- to C-terminus: Carbon catabolite repressor protein 4 homolog 2 (603 aa).

The tract at residues 115-136 (ENNANEDDDLNRNNSAGSGSLA) is disordered. Positions 126–136 (RNNSAGSGSLA) are enriched in low complexity. E302 is a binding site for Mg(2+).

Belongs to the CCR4/nocturin family. In terms of assembly, component of the CCR4-NOT complex, at least composed of CRR4 and CAF1 proteins. Requires Mg(2+) as cofactor.

The protein resides in the nucleus. It is found in the cytoplasm. The catalysed reaction is Exonucleolytic cleavage of poly(A) to 5'-AMP.. In terms of biological role, acts as a catalytic component of the CCR4-NOT core complex, which in the nucleus seems to be a general transcription factor, and in the cytoplasm the major mRNA deadenylase involved in mRNA turnover. The protein is Carbon catabolite repressor protein 4 homolog 2 (CCR4-2) of Arabidopsis thaliana (Mouse-ear cress).